The following is a 141-amino-acid chain: 3-hydroxyacyl-[acyl-carrier-protein] dehydratase FabZ (141 aa).

H48 is a catalytic residue.

It belongs to the thioester dehydratase family. FabZ subfamily.

Its subcellular location is the cytoplasm. The enzyme catalyses a (3R)-hydroxyacyl-[ACP] = a (2E)-enoyl-[ACP] + H2O. Functionally, involved in unsaturated fatty acids biosynthesis. Catalyzes the dehydration of short chain beta-hydroxyacyl-ACPs and long chain saturated and unsaturated beta-hydroxyacyl-ACPs. This Bacillus velezensis (strain DSM 23117 / BGSC 10A6 / LMG 26770 / FZB42) (Bacillus amyloliquefaciens subsp. plantarum) protein is 3-hydroxyacyl-[acyl-carrier-protein] dehydratase FabZ.